The primary structure comprises 1115 residues: Scavenger receptor cysteine-rich type 1 protein M130 (1115 aa).

The first 46 residues, 1 to 46 (MDKLRMVLHENSGSADFRRCSAHLSSFTFAVVAVLSACLVTSSLGG), serve as a signal peptide directing secretion. Topologically, residues 47-1044 (KDKELRLTGG…ESLHATGRSS (998 aa)) are extracellular. 9 SRCR domains span residues 51–151 (LRLT…VTCS), 158–258 (MGLV…VICL), 265–365 (LRVV…VTCS), 372–472 (LRLK…ITCS), 477–577 (PRLV…VVCS), 582–682 (IRLV…VICS), 718–818 (LRLV…VICS), 823–925 (LRLI…ITCA), and 928–1028 (IRLQ…VTCS). Disulfide bonds link Cys-76/Cys-140, Cys-89/Cys-150, Cys-120/Cys-130, Cys-183/Cys-247, Cys-196/Cys-257, Cys-227/Cys-237, Cys-290/Cys-354, Cys-303/Cys-364, Cys-334/Cys-344, Cys-397/Cys-461, Cys-410/Cys-471, Cys-441/Cys-451, Cys-502/Cys-566, Cys-515/Cys-576, Cys-546/Cys-556, Cys-607/Cys-671, Cys-620/Cys-681, Cys-651/Cys-661, Cys-743/Cys-807, Cys-756/Cys-817, Cys-787/Cys-797, Cys-863/Cys-924, and Cys-894/Cys-904. N-linked (GlcNAc...) asparagine glycosylation is present at Asn-105. A glycan (N-linked (GlcNAc...) asparagine) is linked at Asn-139. The N-linked (GlcNAc...) asparagine glycan is linked to Asn-936. Intrachain disulfides connect Cys-953–Cys-1017, Cys-966–Cys-1027, and Cys-997–Cys-1007. Residues 1045–1065 (FVALAIFGVILLACLIAFLIW) form a helical membrane-spanning segment. Residues 1066–1115 (TQKRRQRQRLSVFSGGENSVHQIQYREMNSCLKADETDMLNPSGDHSEVQ) lie on the Cytoplasmic side of the membrane. Positions 1090 to 1093 (YREM) match the Internalization signal motif.

As to quaternary structure, interacts with CSNK2B. Post-translationally, a soluble form (sCD163) is produced by proteolytic shedding which can be induced by lipopolysaccharide, phorbol ester and Fc region of immunoglobulin gamma. This cleavage is dependent on protein kinase C and tyrosine kinases and can be blocked by protease inhibitors. The shedding is inhibited by the tissue inhibitor of metalloproteinase TIMP3, and thus probably induced by membrane-bound metalloproteinases ADAMs. In terms of processing, phosphorylated. In terms of tissue distribution, expressed in monocytes and macrophages. Detected only in one population of monocytes (CD163+) which is in advanced maturation stage.

Its subcellular location is the secreted. It localises to the cell membrane. Functionally, involved in clearance and endocytosis of hemoglobin/haptoglobin complexes by macrophages and may thereby protect tissues from free hemoglobin-mediated oxidative damage. May play a role in the uptake and recycling of iron, via endocytosis of hemoglobin/haptoglobin and subsequent breakdown of heme. Binds hemoglobin/haptoglobin complexes in a calcium-dependent and pH-dependent manner. Induces a cascade of intracellular signals that involves tyrosine kinase-dependent calcium mobilization, inositol triphosphate production and secretion of IL6 and CSF1. May play a role in the process of infection of porcine monocytes/macrophages by African swine fever virus (ASFV). In case of porcine reproductive and respiratory syndrome virus (PRRSV), serves mediates virion attachment and plays a role in viral entry. After shedding, the soluble form (sCD163) may play an anti-inflammatory role. The polypeptide is Scavenger receptor cysteine-rich type 1 protein M130 (CD163) (Sus scrofa (Pig)).